Consider the following 62-residue polypeptide: Photosystem II reaction center protein Z (62 aa).

The next 2 membrane-spanning stretches (helical) occupy residues 8-28 (AVFA…VVFA) and 41-61 (FSGT…NSLI).

It belongs to the PsbZ family. PSII is composed of 1 copy each of membrane proteins PsbA, PsbB, PsbC, PsbD, PsbE, PsbF, PsbH, PsbI, PsbJ, PsbK, PsbL, PsbM, PsbT, PsbY, PsbZ, Psb30/Ycf12, at least 3 peripheral proteins of the oxygen-evolving complex and a large number of cofactors. It forms dimeric complexes.

It is found in the plastid. The protein resides in the chloroplast thylakoid membrane. May control the interaction of photosystem II (PSII) cores with the light-harvesting antenna, regulates electron flow through the 2 photosystem reaction centers. PSII is a light-driven water plastoquinone oxidoreductase, using light energy to abstract electrons from H(2)O, generating a proton gradient subsequently used for ATP formation. This chain is Photosystem II reaction center protein Z, found in Phalaenopsis aphrodite subsp. formosana (Moth orchid).